The chain runs to 298 residues: GTPase Era (298 aa).

Positions 7-174 (RSGFVSIIGR…VELVRKALPQ (168 aa)) constitute an Era-type G domain. The G1 stretch occupies residues 15–22 (GRPNVGKS). 15-22 (GRPNVGKS) serves as a coordination point for GTP. The interval 41–45 (QTTRN) is G2. Residues 62 to 65 (DTPG) are G3. Residues 62–66 (DTPGI) and 124–127 (NKVD) each bind GTP. Positions 124 to 127 (NKVD) are G4. Positions 153-155 (ISA) are G5. The 79-residue stretch at 205–283 (TRDEVPYATA…FLELFVRVRK (79 aa)) folds into the KH type-2 domain.

Belongs to the TRAFAC class TrmE-Era-EngA-EngB-Septin-like GTPase superfamily. Era GTPase family. As to quaternary structure, monomer.

The protein localises to the cytoplasm. It localises to the cell inner membrane. An essential GTPase that binds both GDP and GTP, with rapid nucleotide exchange. Plays a role in 16S rRNA processing and 30S ribosomal subunit biogenesis and possibly also in cell cycle regulation and energy metabolism. The protein is GTPase Era of Geobacter metallireducens (strain ATCC 53774 / DSM 7210 / GS-15).